The sequence spans 113 residues: Cell cycle protein GpsB (113 aa).

The stretch at I36–Q65 forms a coiled coil. The tract at residues A61–A82 is disordered.

This sequence belongs to the GpsB family. As to quaternary structure, forms polymers through the coiled coil domains. Interacts with PBP1, MreC and EzrA.

It is found in the cytoplasm. Its function is as follows. Divisome component that associates with the complex late in its assembly, after the Z-ring is formed, and is dependent on DivIC and PBP2B for its recruitment to the divisome. Together with EzrA, is a key component of the system that regulates PBP1 localization during cell cycle progression. Its main role could be the removal of PBP1 from the cell pole after pole maturation is completed. Also contributes to the recruitment of PBP1 to the division complex. Not essential for septum formation. This Streptococcus pneumoniae (strain Hungary19A-6) protein is Cell cycle protein GpsB.